A 50-amino-acid polypeptide reads, in one-letter code: Protein hunchback (50 aa).

3 C2H2-type zinc fingers span residues 1–5 (HILKH), 11–33 (IRCP…MKSH), and 39–50 (YRCLDCNYATKY).

It belongs to the hunchback C2H2-type zinc-finger protein family.

It localises to the nucleus. In terms of biological role, gap class segmentation protein that controls development of head structures. This chain is Protein hunchback (hb), found in Bradysia coprophila (Dark-winged fungus gnat).